Consider the following 475-residue polypeptide: Protein FIZZY-RELATED 1 (475 aa).

Residues 1–27 (MEEDESTTPKKKSDSQLNLPPSMNRPT) form a disordered region. A compositionally biased stretch (polar residues) spans 15–27 (SQLNLPPSMNRPT). 7 WD repeats span residues 166–203 (QDDF…VTKL), 207–246 (GVDE…NIRT), 249–289 (GHRL…SKLK), 290–329 (GHKS…PVLR), 332–374 (EHAA…HLNC), 376–417 (DTNS…KLAT), and 420–459 (GHSY…KSQS).

The protein belongs to the WD repeat CDC20/Fizzy family. As to quaternary structure, associates with the APC/C complex. Interacts with CDC20-1, CDC20-2, CYCA1-1, CYCA1-2, CYCA3-4, CYCB1-1 and CYCB1-2. Binds to GIG1. As to expression, expressed in the root tip, predominantly in the root cap, quiescent center cells, surrounding stem cells and columella.

The protein localises to the nucleus. It participates in protein modification; protein ubiquitination. In terms of biological role, activator protein that regulates the ubiquitin ligase activity and substrate specificity of the anaphase promoting complex/cyclosome (APC/C). Required for meristem organization and maintenance of quiescent center identity and stem cells. The sequence is that of Protein FIZZY-RELATED 1 (FZR1) from Arabidopsis thaliana (Mouse-ear cress).